The chain runs to 201 residues: Molybdenum cofactor guanylyltransferase (201 aa).

Residues 14–16, K31, and D104 each bind GTP; that span reads LAG. D104 is a Mg(2+) binding site.

Belongs to the MobA family. As to quaternary structure, monomer. Requires Mg(2+) as cofactor.

The protein resides in the cytoplasm. The enzyme catalyses Mo-molybdopterin + GTP + H(+) = Mo-molybdopterin guanine dinucleotide + diphosphate. In terms of biological role, transfers a GMP moiety from GTP to Mo-molybdopterin (Mo-MPT) cofactor (Moco or molybdenum cofactor) to form Mo-molybdopterin guanine dinucleotide (Mo-MGD) cofactor. This is Molybdenum cofactor guanylyltransferase from Helicobacter pylori (strain ATCC 700392 / 26695) (Campylobacter pylori).